A 337-amino-acid chain; its full sequence is tRNA N6-adenosine threonylcarbamoyltransferase (337 aa).

Residues H111 and H115 each contribute to the Fe cation site. Substrate contacts are provided by residues 134 to 138 (LVSGG), D167, G180, and N272. Residue D300 participates in Fe cation binding.

This sequence belongs to the KAE1 / TsaD family. The cofactor is Fe(2+).

The protein resides in the cytoplasm. It catalyses the reaction L-threonylcarbamoyladenylate + adenosine(37) in tRNA = N(6)-L-threonylcarbamoyladenosine(37) in tRNA + AMP + H(+). Required for the formation of a threonylcarbamoyl group on adenosine at position 37 (t(6)A37) in tRNAs that read codons beginning with adenine. Is involved in the transfer of the threonylcarbamoyl moiety of threonylcarbamoyl-AMP (TC-AMP) to the N6 group of A37, together with TsaE and TsaB. TsaD likely plays a direct catalytic role in this reaction. The polypeptide is tRNA N6-adenosine threonylcarbamoyltransferase (Pseudoalteromonas translucida (strain TAC 125)).